A 367-amino-acid polypeptide reads, in one-letter code: Peptide chain release factor 2 (367 aa).

N5-methylglutamine is present on Gln-254.

The protein belongs to the prokaryotic/mitochondrial release factor family. Methylated by PrmC. Methylation increases the termination efficiency of RF2.

The protein resides in the cytoplasm. Its function is as follows. Peptide chain release factor 2 directs the termination of translation in response to the peptide chain termination codons UGA and UAA. This chain is Peptide chain release factor 2, found in Bordetella bronchiseptica (strain ATCC BAA-588 / NCTC 13252 / RB50) (Alcaligenes bronchisepticus).